The following is a 379-amino-acid chain: Trans-prenyltransferase abpB (379 aa).

Residues 90–91 (RL), Arg112, Lys197, Arg264, Lys266, Tyr268, and Tyr338 contribute to the substrate site.

Belongs to the tryptophan dimethylallyltransferase family.

It carries out the reaction aspulvinone E + 2 dimethylallyl diphosphate = aspulvinone H + 2 diphosphate. It catalyses the reaction butyrolactone II + dimethylallyl diphosphate = butyrolactone I + diphosphate. It functions in the pathway secondary metabolite biosynthesis. Its function is as follows. Trans-prenyltransferase that acts in both the aspulvinones and butyrolactones pathways. Prenylates aspulvinone E and butyrolactone II to yield repectively aspulvinone H and butyrolactone I. The chain is Trans-prenyltransferase abpB from Aspergillus terreus (strain NIH 2624 / FGSC A1156).